Here is a 176-residue protein sequence, read N- to C-terminus: Warthog protein 5 (176 aa).

The first 21 residues, 1-21 (MCSMWLMASWLMAFVAGSTLA), serve as a signal peptide directing secretion. A glycan (N-linked (GlcNAc...) asparagine) is linked at Asn70.

In terms of tissue distribution, expressed in seam cells, excretory cell, reproductive system, pharynx, pharyngeal-intestinal valve cells, neurons and neuronal support cells.

It is found in the secreted. Functionally, intercellular signal essential for a variety of patterning events during development. This Caenorhabditis elegans protein is Warthog protein 5 (wrt-5).